Consider the following 86-residue polypeptide: Exodeoxyribonuclease 7 small subunit (86 aa).

Belongs to the XseB family. Heterooligomer composed of large and small subunits.

Its subcellular location is the cytoplasm. It catalyses the reaction Exonucleolytic cleavage in either 5'- to 3'- or 3'- to 5'-direction to yield nucleoside 5'-phosphates.. Functionally, bidirectionally degrades single-stranded DNA into large acid-insoluble oligonucleotides, which are then degraded further into small acid-soluble oligonucleotides. The protein is Exodeoxyribonuclease 7 small subunit of Bacillus licheniformis (strain ATCC 14580 / DSM 13 / JCM 2505 / CCUG 7422 / NBRC 12200 / NCIMB 9375 / NCTC 10341 / NRRL NRS-1264 / Gibson 46).